We begin with the raw amino-acid sequence, 315 residues long: Eukaryotic translation initiation factor 2 subunit 1 (315 aa).

The region spanning 17–88 (EDVVMVNVRS…EKGYIDLSKR (72 aa)) is the S1 motif domain. At Ser-49 the chain carries Phosphoserine; by HRI. Ser-52 carries the phosphoserine modification. Lys-141 carries the post-translational modification N6-acetyllysine. At Ser-158 the chain carries Phosphoserine. Phosphothreonine is present on residues Thr-279 and Thr-281. Residues 293-315 (LERENAEVDGDDDAEEMEAKAED) are disordered. Residues 299–308 (EVDGDDDAEE) are compositionally biased toward acidic residues.

This sequence belongs to the eIF-2-alpha family. As to quaternary structure, eukaryotic translation initiation factor 2 eIF2 is a heterotrimeric complex composed of an alpha (EIF2S1), a beta (EIF2S2) and a gamma (EIF2S3) chain. eIF2 is member of the 43S pre-initiation complex (43S PIC). eIF2 forms a complex with at least CELF1/CUGBP1, CALR, CALR3, EIF2S1, EIF2S2, HSP90B1 and HSPA5. Interaction with METAP2 protects EIF2S1 from inhibitory phosphorylation. Interacts with ABCF1. Associates with ribosomes. Interacts with DDX3X in an RNA-independent manner. In terms of processing, phosphorylation at Ser-49 and Ser-52 stabilizes the eIF-2/GDP/eIF2B complex and prevents GDP/GTP exchange reaction, thus impairing the recycling of eIF-2 between successive rounds of initiation and leading to global inhibition of translation, while concomitantly initiating the preferential translation of integrated stress response (ISR)-specific mRNAs. Substrate for at least 4 kinases: EIF2AK1/HRI, EIF2AK2/PKR, EIF2AK3/PERK and EIF2AK4/GCN2. Phosphorylation on Ser-52 by the EIF2AK4/GCN2 protein kinase occurs in response to amino acid starvation and UV irradiation. Phosphorylation at Ser-52 by the EIF2AK3/PERK protein kinase occurs in response to the unfolded protein response. Phosphorylation at Ser-52 by EIF2AK1/HRI in response to mitochondrial damage promotes relocalization to the mitochondrial surface.

It localises to the cytoplasm. The protein localises to the stress granule. Its subcellular location is the cytosol. It is found in the mitochondrion. With respect to regulation, activity is regulated by phosphorylation at Ser-49 and Ser-52, which stabilizes the eIF2/GDP/eIF2B complex and prevents the eIF2B-mediated exchange of GDP for GTP, thereby preventing the formation of the 43S pre-initiation complex (43S PIC). This results in the global attenuation of 5' cap-dependent protein synthesis and concomitant translation of ISR-specific mRNAs that contain a short upstream open reading frame (uORF) in their 5' UTR, such as ATF4, ATF5, DDIT3/CHOP and PPP1R15A/GADD34. Its function is as follows. Member of the eIF2 complex that functions in the early steps of protein synthesis by forming a ternary complex with GTP and initiator tRNA. This complex binds to a 40S ribosomal subunit, followed by mRNA binding to form a 43S pre-initiation complex. Junction of the 60S ribosomal subunit to form the 80S initiation complex is preceded by hydrolysis of the GTP bound to eIF2 and release of an eIF2-GDP binary complex. In order for eIF2 to recycle and catalyze another round of initiation, the GDP bound to eIF2 must exchange with GTP by way of a reaction catalyzed by eIF2B. EIF2S1/eIF2-alpha is a key component of the integrated stress response (ISR), required for adaptation to various stress: phosphorylation by metabolic-stress sensing protein kinases (EIF2AK1/HRI, EIF2AK2/PKR, EIF2AK3/PERK and EIF2AK4/GCN2) in response to stress converts EIF2S1/eIF2-alpha in a global protein synthesis inhibitor, leading to a attenuation of cap-dependent translation, while concomitantly initiating the preferential translation of ISR-specific mRNAs, such as the transcriptional activators ATF4 and QRICH1, and hence allowing ATF4- and QRICH1-mediated reprogramming. EIF2S1/eIF2-alpha also acts as an activator of mitophagy in response to mitochondrial damage: phosphorylation by EIF2AK1/HRI promotes relocalization to the mitochondrial surface, thereby triggering PRKN-independent mitophagy. In Pongo abelii (Sumatran orangutan), this protein is Eukaryotic translation initiation factor 2 subunit 1 (EIF2S1).